The following is a 136-amino-acid chain: MSLIKEFKAFASRGNVIDMAVGIIIGAAFGKIVSSFVADIIMPPIGIILGGVNFSDLSIVLQAAQGDAPAVVIAYGKFIQTVIDFTIIAFAIFMGLKAINSLKRKQEEAPKAPPAPTKDQELLSEIRDLLKAQQEK.

2 consecutive transmembrane segments (helical) span residues 9-29 (AFAS…GAAF) and 79-99 (IQTV…LKAI).

The protein belongs to the MscL family. Homopentamer.

The protein localises to the cell inner membrane. Functionally, channel that opens in response to stretch forces in the membrane lipid bilayer. May participate in the regulation of osmotic pressure changes within the cell. The chain is Large-conductance mechanosensitive channel from Shewanella sp. (strain MR-4).